The chain runs to 1048 residues: Bifunctional heparan sulfate N-deacetylase/N-sulfotransferase (1048 aa).

Residues 1-172 (MTISGGNQHN…RRCFGINVRR (172 aa)) lie on the Cytoplasmic side of the membrane. Residues 173-192 (CVLALLAITMVSIFYYTHYV) form a helical; Signal-anchor for type II membrane protein membrane-spanning segment. Residues 192 to 752 (VDTGVFNGLI…VRHKKIWSKT (561 aa)) are heparan sulfate N-deacetylase. Residues 193 to 1048 (DTGVFNGLIQ…WLKDDLSTGT (856 aa)) are Lumenal-facing. Residues Asn-388 and Asn-555 are each glycosylated (N-linked (GlcNAc...) asparagine). The heparan sulfate N-sulfotransferase stretch occupies residues 753–1048 (KNCDSLPKFL…WLKDDLSTGT (296 aa)). The For sulfotransferase activity role is filled by Lys-768. A 3'-phosphoadenylyl sulfate-binding site is contributed by 768–772 (KTGTT). N-linked (GlcNAc...) asparagine glycosylation is present at Asn-823. Ser-877 provides a ligand contact to 3'-phosphoadenylyl sulfate. Residue Asn-892 is glycosylated (N-linked (GlcNAc...) asparagine). A disulfide bridge links Cys-983 with Cys-993. Residue 998 to 1002 (KGRQY) participates in 3'-phosphoadenylyl sulfate binding.

Belongs to the sulfotransferase 1 family. NDST subfamily. Monomer.

It is found in the golgi apparatus membrane. It carries out the reaction alpha-D-glucosaminyl-[heparan sulfate](n) + 3'-phosphoadenylyl sulfate = N-sulfo-alpha-D-glucosaminyl-[heparan sulfate](n) + adenosine 3',5'-bisphosphate + 2 H(+). It participates in glycan metabolism; heparan sulfate biosynthesis. It functions in the pathway glycan metabolism; heparin biosynthesis. Functionally, essential bifunctional enzyme that catalyzes both the N-deacetylation and the N-sulfation of glucosamine (GlcNAc) of the glycosaminoglycan in heparan sulfate. Modifies the GlcNAc-GlcA disaccharide repeating sugar backbone to make N-sulfated heparosan, a prerequisite substrate for later modifications in heparin biosynthesis. Plays a role in diffusion of morphogen wingless (wg) via its role in heparan sulfate proteoglycans (HSPGs) biosynthesis, HSPGs being required for movement of wg morphogens. Required for wg signaling during both embryonic and imaginal disk development. Also required for FGF receptor signaling. This is Bifunctional heparan sulfate N-deacetylase/N-sulfotransferase (sfl) from Drosophila melanogaster (Fruit fly).